The sequence spans 244 residues: L-xylulose reductase (244 aa).

Met1 bears the N-acetylmethionine mark. 11 to 40 serves as a coordination point for NADP(+); that stretch reads LVTGAGKGIGRGTVQALHATGARVVAVSRT. At Arg21 the chain carries Omega-N-methylarginine. The residue at position 46 (Ser46) is a Phosphoserine. A substrate-binding site is contributed by Ser136. Tyr149 serves as the catalytic Proton acceptor. NADP(+) is bound at residue Lys153.

It belongs to the short-chain dehydrogenases/reductases (SDR) family. Homotetramer. In terms of tissue distribution, highly expressed in kidney, liver and epididymis. In the epididymis, it is mainly expressed in the proximal and distal sections of the corpus region. Weakly or not expressed in brain, lung, heart, spleen and testis.

Its subcellular location is the membrane. The catalysed reaction is xylitol + NADP(+) = L-xylulose + NADPH + H(+). In terms of biological role, catalyzes the NADPH-dependent reduction of several pentoses, tetroses, trioses, alpha-dicarbonyl compounds and L-xylulose. Participates in the uronate cycle of glucose metabolism. May play a role in the water absorption and cellular osmoregulation in the proximal renal tubules by producing xylitol, an osmolyte, thereby preventing osmolytic stress from occurring in the renal tubules. This chain is L-xylulose reductase (DCXR), found in Homo sapiens (Human).